A 365-amino-acid chain; its full sequence is Poly(rC)-binding protein 2 (365 aa).

2 consecutive KH domains span residues 13 to 75 and 97 to 162; these read TLTI…FAMI and PVTL…VKQI. K115 participates in a covalent cross-link: Glycyl lysine isopeptide (Lys-Gly) (interchain with G-Cter in SUMO2). A Phosphoserine modification is found at S173. K185 participates in a covalent cross-link: Glycyl lysine isopeptide (Lys-Gly) (interchain with G-Cter in SUMO2). S189 and S272 each carry phosphoserine. The region spanning 287–351 is the KH 3 domain; that stretch reads TTSHELTIPN…ASISLAQYLI (65 aa). K322 participates in a covalent cross-link: Glycyl lysine isopeptide (Lys-Gly) (interchain with G-Cter in SUMO2). Phosphoserine is present on residues S364 and S365.

In terms of assembly, identified in a mRNP complex, at least composed of DHX9, DDX3X, ELAVL1, HNRNPU, IGF2BP1, ILF3, PABPC1, PCBP2, PTBP2, STAU1, STAU2, SYNCRIP and YBX1. Interacts with IFIH1 and RNF135. Interacts with MAVS (via C-terminus) and ITCH (via WW domains). Interacts with CGAS; preventing the formation of liquid-like droplets in which CGAS is activated. In terms of processing, phosphorylated. The non-phosphorylated form(s) exhibited the strongest poly(rC)-binding activity. (Microbial infection) Proteolytically cleaved by picornavirus proteinase 3CD. In terms of tissue distribution, detected in all tissues examined.

Its subcellular location is the nucleus. It localises to the cytoplasm. In terms of biological role, single-stranded nucleic acid binding protein that binds preferentially to oligo dC. Major cellular poly(rC)-binding protein. Also binds poly(rU). Acts as a negative regulator of antiviral signaling. Negatively regulates cellular antiviral responses mediated by MAVS signaling. It acts as an adapter between MAVS and the E3 ubiquitin ligase ITCH, therefore triggering MAVS ubiquitination and degradation. Negativeley regulates the cGAS-STING pathway via interaction with CGAS, preventing the formation of liquid-like droplets in which CGAS is activated. Together with PCBP1, required for erythropoiesis, possibly by regulating mRNA splicing. Functionally, (Microbial infection) In case of infection by poliovirus, binds to the viral internal ribosome entry site (IRES) and stimulates the IRES-mediated translation. Also plays a role in initiation of viral RNA replication in concert with the viral protein 3CD. The sequence is that of Poly(rC)-binding protein 2 from Homo sapiens (Human).